Here is a 75-residue protein sequence, read N- to C-terminus: Probable [Fe-S]-dependent transcriptional repressor (75 aa).

The iron-sulfur cluster site is built by Cys55, Cys60, Cys63, and Cys72.

This sequence belongs to the FeoC family.

May function as a transcriptional regulator that controls feoABC expression. The polypeptide is Probable [Fe-S]-dependent transcriptional repressor (Serratia marcescens).